The chain runs to 184 residues: Intraflagellar transport protein 22 homolog (184 aa).

GTP-binding positions include 10–17 (GPTESGKT), 62–66 (DCGGD), and 122–125 (KKPG).

This sequence belongs to the small GTPase superfamily. Rab family.

The sequence is that of Intraflagellar transport protein 22 homolog (ift22) from Xenopus tropicalis (Western clawed frog).